A 288-amino-acid polypeptide reads, in one-letter code: ATP synthase gamma chain (288 aa).

It belongs to the ATPase gamma chain family. As to quaternary structure, F-type ATPases have 2 components, CF(1) - the catalytic core - and CF(0) - the membrane proton channel. CF(1) has five subunits: alpha(3), beta(3), gamma(1), delta(1), epsilon(1). CF(0) has three main subunits: a, b and c.

It localises to the cell inner membrane. In terms of biological role, produces ATP from ADP in the presence of a proton gradient across the membrane. The gamma chain is believed to be important in regulating ATPase activity and the flow of protons through the CF(0) complex. The sequence is that of ATP synthase gamma chain from Rickettsia typhi (strain ATCC VR-144 / Wilmington).